A 185-amino-acid polypeptide reads, in one-letter code: dTDP-4-dehydrorhamnose 3,5-epimerase (185 aa).

Residues Arg-23, Glu-28, 47 to 49, and Arg-59 each bind substrate; that span reads QDN. His-62 serves as the catalytic Proton acceptor. 2 residues coordinate substrate: Lys-72 and His-119. Residue Tyr-132 is the Proton donor of the active site. Substrate is bound by residues Asp-143 and Lys-168.

It belongs to the dTDP-4-dehydrorhamnose 3,5-epimerase family. Homodimer.

The enzyme catalyses dTDP-4-dehydro-6-deoxy-alpha-D-glucose = dTDP-4-dehydro-beta-L-rhamnose. Its pathway is carbohydrate biosynthesis; dTDP-L-rhamnose biosynthesis. It participates in bacterial outer membrane biogenesis; LPS O-antigen biosynthesis. In terms of biological role, catalyzes the epimerization of the C3' and C5'positions of dTDP-6-deoxy-D-xylo-4-hexulose, forming dTDP-6-deoxy-L-lyxo-4-hexulose. This Escherichia coli (strain K12) protein is dTDP-4-dehydrorhamnose 3,5-epimerase (rfbC).